Consider the following 137-residue polypeptide: Small ribosomal subunit protein uS11 (137 aa).

Residues 116–137 (EDVTPVPSDSTRKKGGRRGRRL) form a disordered region. The span at 128–137 (KKGGRRGRRL) shows a compositional bias: basic residues.

The protein belongs to the universal ribosomal protein uS11 family.

This is Small ribosomal subunit protein uS11 (RPS14) from Kluyveromyces lactis (strain ATCC 8585 / CBS 2359 / DSM 70799 / NBRC 1267 / NRRL Y-1140 / WM37) (Yeast).